Reading from the N-terminus, the 465-residue chain is MAKKAPDVGDYKYGFHDEDVSIFRSERGLTENIVREISKMKEEPEWMLDFRLKALKLFYKMPMPQWGGDLSELNFDDITYYVKPSEHTQRSWDEVPEEIKRTFDKLGIPEAEQKYLAGVSAQYESEVVYHNMEKELEEKGIIFKDTDSALRENEELFKEYFASVVPAADNKFAALNSAVWSGGSFIYVPKNVKLDTPLQAYFRINSENMGQFERTLIIADEGASVNYVEGCTAPVYTTSSLHSAVVEIIVHKDAHVRYTTIQNWANNVYNLVTKRTFVHENGNMEWVDGNLGSKLTMKYPNCVLLGEGAKGSTLSIAFAGKGQVQDAGAKMIHKAPNTSSTIVSKSISKNGGKVIYRGIVHFGRKAKGARSNIECDTLILDNESTSDTIPYNEVFNDNISLEHEAKVSKVSEEQLFYLMSRGISEEEATEMIVMGFIEPFTKELPMEYAVEMNRLIKFEMEGSIG.

This sequence belongs to the iron-sulfur cluster assembly SufBD family.

This chain is Iron-sulfur cluster assembly SufBD family protein SH2035, found in Staphylococcus haemolyticus (strain JCSC1435).